The chain runs to 183 residues: Peptide deformylase (183 aa).

Residues Cys-111 and His-154 each contribute to the Fe cation site. Residue Glu-155 is part of the active site. His-158 is a binding site for Fe cation.

It belongs to the polypeptide deformylase family. Requires Fe(2+) as cofactor.

The catalysed reaction is N-terminal N-formyl-L-methionyl-[peptide] + H2O = N-terminal L-methionyl-[peptide] + formate. In terms of biological role, removes the formyl group from the N-terminal Met of newly synthesized proteins. Requires at least a dipeptide for an efficient rate of reaction. N-terminal L-methionine is a prerequisite for activity but the enzyme has broad specificity at other positions. In Staphylococcus epidermidis (strain ATCC 35984 / DSM 28319 / BCRC 17069 / CCUG 31568 / BM 3577 / RP62A), this protein is Peptide deformylase.